The sequence spans 266 residues: Vitamin B12-binding protein (266 aa).

The N-terminal stretch at 1–22 (MAKSLFRALVALSFLAPLWLNA) is a signal peptide. A Fe/B12 periplasmic-binding domain is found at 25-266 (RVITLSPANT…QLCNALSQVD (242 aa)). Residues Y50 and 242-246 (DWFER) contribute to the cyanocob(III)alamin site. Residues C183 and C259 are joined by a disulfide bond.

The protein belongs to the BtuF family. As to quaternary structure, the complex is composed of two ATP-binding proteins (BtuD), two transmembrane proteins (BtuC) and a solute-binding protein (BtuF).

Its subcellular location is the periplasm. Part of the ABC transporter complex BtuCDF involved in vitamin B12 import. Binds vitamin B12 and delivers it to the periplasmic surface of BtuC. This chain is Vitamin B12-binding protein, found in Escherichia coli O6:H1 (strain CFT073 / ATCC 700928 / UPEC).